Reading from the N-terminus, the 176-residue chain is ATP synthase subunit b (176 aa).

Residues 27–47 (FFVFSFLTLILVVTIVTLLVY) form a helical membrane-spanning segment.

Belongs to the ATPase B chain family. In terms of assembly, F-type ATPases have 2 components, F(1) - the catalytic core - and F(0) - the membrane proton channel. F(1) has five subunits: alpha(3), beta(3), gamma(1), delta(1), epsilon(1). F(0) has three main subunits: a(1), b(2) and c(10-14). The alpha and beta chains form an alternating ring which encloses part of the gamma chain. F(1) is attached to F(0) by a central stalk formed by the gamma and epsilon chains, while a peripheral stalk is formed by the delta and b chains.

It localises to the cell membrane. F(1)F(0) ATP synthase produces ATP from ADP in the presence of a proton or sodium gradient. F-type ATPases consist of two structural domains, F(1) containing the extramembraneous catalytic core and F(0) containing the membrane proton channel, linked together by a central stalk and a peripheral stalk. During catalysis, ATP synthesis in the catalytic domain of F(1) is coupled via a rotary mechanism of the central stalk subunits to proton translocation. Functionally, component of the F(0) channel, it forms part of the peripheral stalk, linking F(1) to F(0). This Metamycoplasma arthritidis (strain 158L3-1) (Mycoplasma arthritidis) protein is ATP synthase subunit b.